The following is a 212-amino-acid chain: Small ribosomal subunit protein uS5 (212 aa).

The segment at 1 to 42 (MPGRERRDGGRSADKNDNNKGRNDRGRNDRNNRRGRGRDDDR) is disordered. The S5 DRBM domain maps to 45 to 108 (YIERVVTINR…EEARKNFFRV (64 aa)).

The protein belongs to the universal ribosomal protein uS5 family. In terms of assembly, part of the 30S ribosomal subunit. Contacts proteins S4 and S8.

With S4 and S12 plays an important role in translational accuracy. In terms of biological role, located at the back of the 30S subunit body where it stabilizes the conformation of the head with respect to the body. This Corynebacterium kroppenstedtii (strain DSM 44385 / JCM 11950 / CIP 105744 / CCUG 35717) protein is Small ribosomal subunit protein uS5.